A 1693-amino-acid chain; its full sequence is 1-phosphatidylinositol 4,5-bisphosphate phosphodiesterase eta-1 (1693 aa).

Positions 20–128 constitute a PH domain; that stretch reads SVMQSGTQMI…WITGLKYLMA (109 aa). EF-hand domains lie at 142-177, 178-214, and 226-246; these read THDQWVKQTFEEADKNGDGLLNIEEIHQLMHKLNVN, LPRRKVRQMFQEADTDENQGTLTFEEFCVFYKMMSLR, and DKKDHLTVEELAQFLKVEQKM. Ca(2+)-binding residues include Asp-155, Asn-157, Asp-159, and Glu-166. One can recognise a PI-PLC X-box domain in the interval 299–444; that stretch reads QDMDQPLCNY…LKGKILVKGK (146 aa). Residue His-314 is part of the active site. Ca(2+)-binding residues include Asn-315, Glu-344, and Asp-346. Residue His-358 is part of the active site. Glu-393 is a binding site for Ca(2+). Residues Lys-442 and Lys-444 each contribute to the substrate site. The interval 526–585 is disordered; sequence LNAHLKQSPDVKESGKKSHGRSLMTNFGKHKKTTKSRSKSYSTDDEEDTQQSTGKEGGQL. Residues 532–541 show a composition bias toward basic and acidic residues; sequence QSPDVKESGK. Basic residues predominate over residues 553 to 563; sequence GKHKKTTKSRS. The region spanning 601–714 is the PI-PLC Y-box domain; the sequence is LSDLVVYTNS…GYVLKPQQMC (114 aa). Substrate is bound by residues Ser-627 and Arg-654. The C2 domain maps to 715-843; that stretch reads KGTFNPFSGD…PGYRHVYLEG (129 aa). Ca(2+)-binding residues include Ile-758, Asp-760, Asp-784, Asp-813, His-814, and Asp-815. Positions 992–1005 are enriched in basic and acidic residues; it reads IEGKENSLAEDKDG. Disordered regions lie at residues 992 to 1014, 1052 to 1089, 1300 to 1329, and 1578 to 1613; these read IEGKENSLAEDKDGRRKGKASIK, TGEQLGMSSPRGGRTTSNATSNCQENPCPSKSLSPKQH, LESNLPGSPNTSRGWLPKSPTKGEDWETLK, and LSSRSQSRVRNIASRAKEKQEANKQKVPNPSNGAGV. Over residues 1065–1086 the composition is skewed to polar residues; the sequence is RTTSNATSNCQENPCPSKSLSP. A compositionally biased stretch (basic and acidic residues) spans 1592–1601; sequence RAKEKQEANK.

It depends on Ca(2+) as a cofactor. In terms of tissue distribution, expressed in brain and to a lower extent in lung. In brain, it is found in cerebrum, cerebellum and spinal cord. In embryo expressed in the notochord, developing spinal cord (in a ventral to dorsal gradient), dorsal root ganglia, cerebellum and dermatomyosome.

The protein localises to the cytoplasm. It is found in the membrane. The catalysed reaction is a 1,2-diacyl-sn-glycero-3-phospho-(1D-myo-inositol-4,5-bisphosphate) + H2O = 1D-myo-inositol 1,4,5-trisphosphate + a 1,2-diacyl-sn-glycerol + H(+). Its function is as follows. The production of the second messenger molecules diacylglycerol (DAG) and inositol 1,4,5-trisphosphate (IP3) is mediated by calcium-activated phosphatidylinositol-specific phospholipase C enzymes. The protein is 1-phosphatidylinositol 4,5-bisphosphate phosphodiesterase eta-1 of Homo sapiens (Human).